The primary structure comprises 316 residues: Glutathione synthetase (316 aa).

An ATP-grasp domain is found at 125–310 (KLFTAWFSDL…ITGMLMDAIE (186 aa)). Position 151–207 (151–207 (WEKHSDIILKPLDGMGGASIFRVKEGDPNLGVIAETLTEHGTCYCMAQNYLPAIKDG)) interacts with ATP. Residues glutamate 281 and asparagine 283 each coordinate Mg(2+).

The protein belongs to the prokaryotic GSH synthase family. It depends on Mg(2+) as a cofactor. The cofactor is Mn(2+).

It catalyses the reaction gamma-L-glutamyl-L-cysteine + glycine + ATP = glutathione + ADP + phosphate + H(+). It functions in the pathway sulfur metabolism; glutathione biosynthesis; glutathione from L-cysteine and L-glutamate: step 2/2. The chain is Glutathione synthetase from Shigella flexneri.